A 198-amino-acid polypeptide reads, in one-letter code: MKQFIDFIPLLLFFIVYKTEPRAVDILGNTYMVGGIFSATAMLIISSVVVYGILYLKQRKLEKSQWLTLVACLVFGSLTLAFHSETFLKWKAPVVNWLFAVAFAGSHFIGDRPIIQRIMGHALTLPAAIWTRLNIAWIVFFLFCGAANLYVAFTYQEFWVDFKVFGSLGMTLIFLVGQGIYLSRHLHDTAPNTTKSED.

5 helical membrane passes run 36–56 (IFSA…ILYL), 67–87 (LTLV…SETF), 90–110 (WKAP…HFIG), 133–153 (LNIA…YVAF), and 162–182 (FKVF…GIYL).

This sequence belongs to the YciB family.

Its subcellular location is the cell inner membrane. Functionally, plays a role in cell envelope biogenesis, maintenance of cell envelope integrity and membrane homeostasis. The protein is Inner membrane-spanning protein YciB of Pseudomonas savastanoi pv. phaseolicola (strain 1448A / Race 6) (Pseudomonas syringae pv. phaseolicola (strain 1448A / Race 6)).